The following is a 400-amino-acid chain: Renin (400 aa).

Positions 1–23 (MDAWRGMPRWGLLLLLWGSCTFG) are cleaved as a signal peptide. Residues 24 to 60 (LPTETTTFKRISLKRMPSIRESLKERGVDMARLGPER) constitute a propeptide, activation peptide. Residue N65 is glycosylated (N-linked (GlcNAc...) asparagine). The Peptidase A1 domain occupies 80–397 (YYGEIGIGTP…DRGNNRIGFA (318 aa)). D98 is a catalytic residue. A disulfide bond links C111 and C118. Residue N135 is glycosylated (N-linked (GlcNAc...) asparagine). C277 and C281 are joined by a disulfide. The active site involves D286. C319 and C356 are disulfide-bonded.

This sequence belongs to the peptidase A1 family. In terms of assembly, interacts with ATP6AP2.

It localises to the secreted. It is found in the membrane. The enzyme catalyses Cleavage of Leu-|-Xaa bond in angiotensinogen to generate angiotensin I.. Interaction with ATP6AP2 results in a 5-fold increased efficiency in angiotensinogen processing. In terms of biological role, renin is a highly specific endopeptidase, whose only known function is to generate angiotensin I from angiotensinogen in the plasma, initiating a cascade of reactions that produce an elevation of blood pressure and increased sodium retention by the kidney. This chain is Renin (REN), found in Callithrix jacchus (White-tufted-ear marmoset).